Consider the following 372-residue polypeptide: UDP-N-acetylglucosamine--N-acetylmuramyl-(pentapeptide) pyrophosphoryl-undecaprenol N-acetylglucosamine transferase (372 aa).

UDP-N-acetyl-alpha-D-glucosamine contacts are provided by residues 16–18, N128, R164, S192, I250, and Q295; that span reads TGG.

This sequence belongs to the glycosyltransferase 28 family. MurG subfamily.

Its subcellular location is the cell inner membrane. The enzyme catalyses di-trans,octa-cis-undecaprenyl diphospho-N-acetyl-alpha-D-muramoyl-L-alanyl-D-glutamyl-meso-2,6-diaminopimeloyl-D-alanyl-D-alanine + UDP-N-acetyl-alpha-D-glucosamine = di-trans,octa-cis-undecaprenyl diphospho-[N-acetyl-alpha-D-glucosaminyl-(1-&gt;4)]-N-acetyl-alpha-D-muramoyl-L-alanyl-D-glutamyl-meso-2,6-diaminopimeloyl-D-alanyl-D-alanine + UDP + H(+). It participates in cell wall biogenesis; peptidoglycan biosynthesis. In terms of biological role, cell wall formation. Catalyzes the transfer of a GlcNAc subunit on undecaprenyl-pyrophosphoryl-MurNAc-pentapeptide (lipid intermediate I) to form undecaprenyl-pyrophosphoryl-MurNAc-(pentapeptide)GlcNAc (lipid intermediate II). The polypeptide is UDP-N-acetylglucosamine--N-acetylmuramyl-(pentapeptide) pyrophosphoryl-undecaprenol N-acetylglucosamine transferase (Paraburkholderia phytofirmans (strain DSM 17436 / LMG 22146 / PsJN) (Burkholderia phytofirmans)).